A 367-amino-acid polypeptide reads, in one-letter code: Serine/threonine-protein kinase-transforming protein Rmil (367 aa).

The tract at residues 1–64 is disordered; it reads EGGSTAGLSA…DSSDDWEIPD (64 aa). Residues 33–57 are compositionally biased toward basic and acidic residues; it reads QRERKSSSSSEDRNRMKTLGRRDSS. Residues 67–327 enclose the Protein kinase domain; sequence ITVGQRIGSG…PQILASIELL (261 aa). ATP is bound by residues 73–81 and lysine 93; that span reads IGSGSFGTV. The active-site Proton acceptor is aspartate 186.

The protein belongs to the protein kinase superfamily. TKL Ser/Thr protein kinase family. RAF subfamily.

The catalysed reaction is L-seryl-[protein] + ATP = O-phospho-L-seryl-[protein] + ADP + H(+). It carries out the reaction L-threonyl-[protein] + ATP = O-phospho-L-threonyl-[protein] + ADP + H(+). The protein is Serine/threonine-protein kinase-transforming protein Rmil (V-RMIL) of Avian retrovirus IC10.